A 292-amino-acid chain; its full sequence is Ribosomal protein L11 methyltransferase (292 aa).

Residues T144, G165, D187, and N229 each contribute to the S-adenosyl-L-methionine site.

It belongs to the methyltransferase superfamily. PrmA family.

Its subcellular location is the cytoplasm. It carries out the reaction L-lysyl-[protein] + 3 S-adenosyl-L-methionine = N(6),N(6),N(6)-trimethyl-L-lysyl-[protein] + 3 S-adenosyl-L-homocysteine + 3 H(+). Methylates ribosomal protein L11. This is Ribosomal protein L11 methyltransferase from Pseudomonas syringae pv. tomato (strain ATCC BAA-871 / DC3000).